A 156-amino-acid polypeptide reads, in one-letter code: Small ribosomal subunit protein bS16 (156 aa).

Positions 114 to 156 (ENEPVAEAITPKKKKAAKADEAKAEDTAADAEAPAADAEAADK) are disordered. A compositionally biased stretch (basic and acidic residues) spans 130–139 (AKADEAKAED). A compositionally biased stretch (low complexity) spans 143 to 156 (DAEAPAADAEAADK).

This sequence belongs to the bacterial ribosomal protein bS16 family.

This chain is Small ribosomal subunit protein bS16, found in Rhodococcus erythropolis (strain PR4 / NBRC 100887).